Reading from the N-terminus, the 515-residue chain is Bifunctional purine biosynthesis protein PurH (515 aa).

Residues 1 to 145 (MTKRVLISVS…KNHASVTVVV (145 aa)) enclose the MGS-like domain.

Belongs to the PurH family.

It catalyses the reaction (6R)-10-formyltetrahydrofolate + 5-amino-1-(5-phospho-beta-D-ribosyl)imidazole-4-carboxamide = 5-formamido-1-(5-phospho-D-ribosyl)imidazole-4-carboxamide + (6S)-5,6,7,8-tetrahydrofolate. The catalysed reaction is IMP + H2O = 5-formamido-1-(5-phospho-D-ribosyl)imidazole-4-carboxamide. Its pathway is purine metabolism; IMP biosynthesis via de novo pathway; 5-formamido-1-(5-phospho-D-ribosyl)imidazole-4-carboxamide from 5-amino-1-(5-phospho-D-ribosyl)imidazole-4-carboxamide (10-formyl THF route): step 1/1. It participates in purine metabolism; IMP biosynthesis via de novo pathway; IMP from 5-formamido-1-(5-phospho-D-ribosyl)imidazole-4-carboxamide: step 1/1. The chain is Bifunctional purine biosynthesis protein PurH from Streptococcus pneumoniae serotype 2 (strain D39 / NCTC 7466).